The primary structure comprises 391 residues: Digeranylgeranylglycerophospholipid reductase (391 aa).

FAD-binding residues include glycine 19, aspartate 38, cysteine 49, alanine 50, alanine 52, arginine 99, valine 123, aspartate 279, glycine 291, and isoleucine 292. Valine 369 contacts a 2,3-bis-O-(geranylgeranyl)-sn-glycerol 1-phospholipid.

This sequence belongs to the geranylgeranyl reductase family. DGGGPL reductase subfamily. It depends on FAD as a cofactor.

The enzyme catalyses a 2,3-bis-O-phytanyl-sn-glycerol 1-phospholipid + 8 A = a 2,3-bis-O-(geranylgeranyl)-sn-glycerol 1-phospholipid + 8 AH2. It catalyses the reaction 2,3-bis-O-(phytanyl)-sn-glycerol 1-phosphate + 8 A = 2,3-bis-O-(geranylgeranyl)-sn-glycerol 1-phosphate + 8 AH2. It carries out the reaction CDP-2,3-bis-O-(geranylgeranyl)-sn-glycerol + 8 AH2 = CDP-2,3-bis-O-(phytanyl)-sn-glycerol + 8 A. The catalysed reaction is archaetidylserine + 8 AH2 = 2,3-bis-O-phytanyl-sn-glycero-3-phospho-L-serine + 8 A. Its pathway is membrane lipid metabolism; glycerophospholipid metabolism. Its function is as follows. Is involved in the reduction of 2,3-digeranylgeranylglycerophospholipids (unsaturated archaeols) into 2,3-diphytanylglycerophospholipids (saturated archaeols) in the biosynthesis of archaeal membrane lipids. Catalyzes the formation of archaetidic acid (2,3-di-O-phytanyl-sn-glyceryl phosphate) from 2,3-di-O-geranylgeranylglyceryl phosphate (DGGGP) via the hydrogenation of each double bond of the isoprenoid chains. Is also probably able to reduce double bonds of geranyl groups in CDP-2,3-bis-O-(geranylgeranyl)-sn-glycerol and archaetidylserine, thus acting at various stages in the biosynthesis of archaeal membrane lipids. This is Digeranylgeranylglycerophospholipid reductase from Methanococcus aeolicus (strain ATCC BAA-1280 / DSM 17508 / OCM 812 / Nankai-3).